We begin with the raw amino-acid sequence, 346 residues long: MESTLSAGIIMAEALQNRLPGLENMWLWVTFLGDPKNLFQFCFPAAYYASRRLGISVLWITFIAEWLNLVFKWFLFGDRPFWWVHESGYSTQTPIQIHQFPSSCETGPGSPSGHCMITGAALWPVMTAISSQVASRSRSPWVRVIPGLAYCTFLLAVGLSRVFLLAHFPHQVLGGLIVGAALGWLMSPRVPMERELSFYGLTALALMLGASLMYWTLFTLGLDLSWSINLASKWCERPEWVHMDSRPFASLSRDSGSALGLGIALHTPCYAQIRRAHLGNGQKIACFVLAMGLLVFLEWLGYPPQISLFYIFNFLKYTLWPCLVLALVPWVVHTLSDQEAPPIRSS.

At 1–24 (MESTLSAGIIMAEALQNRLPGLEN) the chain is on the lumenal side. A helical membrane pass occupies residues 25–45 (MWLWVTFLGDPKNLFQFCFPA). Over 46–56 (AYYASRRLGIS) the chain is Cytoplasmic. The chain crosses the membrane as a helical span at residues 57–77 (VLWITFIAEWLNLVFKWFLFG). The Lumenal segment spans residues 78-108 (DRPFWWVHESGYSTQTPIQIHQFPSSCETGP). Arg79 is a substrate binding site. Residues 109–129 (GSPSGHCMITGAALWPVMTAI) form a helical membrane-spanning segment. Catalysis depends on His114, which acts as the Proton donor. Residues 130–138 (SSQVASRSR) are Cytoplasmic-facing. The helical transmembrane segment at 139 to 159 (SPWVRVIPGLAYCTFLLAVGL) threads the bilayer. Residues 160–167 (SRVFLLAH) are Lumenal-facing. Arg161 contributes to the substrate binding site. His167 functions as the Nucleophile in the catalytic mechanism. The chain crosses the membrane as a helical span at residues 168–186 (FPHQVLGGLIVGAALGWLM). At 187–197 (SPRVPMERELS) the chain is on the cytoplasmic side. A helical membrane pass occupies residues 198 to 218 (FYGLTALALMLGASLMYWTLF). Residues 219 to 254 (TLGLDLSWSINLASKWCERPEWVHMDSRPFASLSRD) lie on the Lumenal side of the membrane. Residues 255-273 (SGSALGLGIALHTPCYAQI) traverse the membrane as a helical segment. At 274 to 283 (RRAHLGNGQK) the chain is on the cytoplasmic side. Residues 284–304 (IACFVLAMGLLVFLEWLGYPP) form a helical membrane-spanning segment. Topologically, residues 305-307 (QIS) are lumenal. The chain crosses the membrane as a helical span at residues 308–328 (LFYIFNFLKYTLWPCLVLALV). Topologically, residues 329–346 (PWVVHTLSDQEAPPIRSS) are cytoplasmic.

The protein belongs to the glucose-6-phosphatase family. Widely expressed. Highly expressed in heart and testis and to a lower extent in spleen, stomach, small intestine, skeletal muscle and uterus. Expressed in muscle, brain, thymus, lung, kidney, spleen and pancreas (at protein level). In the brain, expressed in astrocytes (at protein level).

It is found in the endoplasmic reticulum membrane. The enzyme catalyses D-glucose 6-phosphate + H2O = D-glucose + phosphate. The protein operates within carbohydrate biosynthesis; gluconeogenesis. Its activity is regulated as follows. Inhibited by vanadate. Hydrolyzes glucose-6-phosphate to glucose in the endoplasmic reticulum. May form with the glucose-6-phosphate transporter (SLC37A4/G6PT) a ubiquitously expressed complex responsible for glucose production through glycogenolysis and gluconeogenesis. Probably required for normal neutrophil function. This is Glucose-6-phosphatase 3 (G6pc3) from Mus musculus (Mouse).